Consider the following 205-residue polypeptide: RNA pyrophosphohydrolase (205 aa).

Residues 6–149 (GFRPNVGIVL…KRGVYARALR (144 aa)) enclose the Nudix hydrolase domain. The Nudix box signature appears at 38–59 (GGMNTDETPVEAMYRELREETG). Residues 178–205 (GSSAAGHDRPRKRPRKRGGVLPVRINND) are disordered. Over residues 186 to 195 (RPRKRPRKRG) the composition is skewed to basic residues.

Belongs to the Nudix hydrolase family. RppH subfamily. Requires a divalent metal cation as cofactor.

Accelerates the degradation of transcripts by removing pyrophosphate from the 5'-end of triphosphorylated RNA, leading to a more labile monophosphorylated state that can stimulate subsequent ribonuclease cleavage. The protein is RNA pyrophosphohydrolase of Xanthomonas campestris pv. campestris (strain 8004).